The chain runs to 465 residues: Cysteine--tRNA ligase (465 aa).

A Zn(2+)-binding site is contributed by cysteine 27. The 'HIGH' region signature appears at 29–39 (PTVYNFFHIGN). Residues cysteine 207, histidine 232, and glutamate 236 each contribute to the Zn(2+) site. Positions 264-268 (KMSKS) match the 'KMSKS' region motif. Lysine 267 is a binding site for ATP.

It belongs to the class-I aminoacyl-tRNA synthetase family. Monomer. Zn(2+) is required as a cofactor.

It is found in the cytoplasm. It carries out the reaction tRNA(Cys) + L-cysteine + ATP = L-cysteinyl-tRNA(Cys) + AMP + diphosphate. This chain is Cysteine--tRNA ligase, found in Clostridium botulinum (strain Okra / Type B1).